A 628-amino-acid chain; its full sequence is tRNA uridine 5-carboxymethylaminomethyl modification enzyme MnmG 1 (628 aa).

Residue glycine 11–glycine 16 participates in FAD binding. Position 280 to 294 (glycine 280 to phenylalanine 294) interacts with NAD(+).

It belongs to the MnmG family. Homodimer. Heterotetramer of two MnmE and two MnmG subunits. Requires FAD as cofactor.

It localises to the cytoplasm. Functionally, NAD-binding protein involved in the addition of a carboxymethylaminomethyl (cmnm) group at the wobble position (U34) of certain tRNAs, forming tRNA-cmnm(5)s(2)U34. The protein is tRNA uridine 5-carboxymethylaminomethyl modification enzyme MnmG 1 of Fusobacterium nucleatum subsp. nucleatum (strain ATCC 25586 / DSM 15643 / BCRC 10681 / CIP 101130 / JCM 8532 / KCTC 2640 / LMG 13131 / VPI 4355).